Here is a 307-residue protein sequence, read N- to C-terminus: Aspartate carbamoyltransferase catalytic subunit (307 aa).

Arginine 54 and threonine 55 together coordinate carbamoyl phosphate. L-aspartate is bound at residue lysine 83. 3 residues coordinate carbamoyl phosphate: arginine 104, histidine 132, and glutamine 135. The L-aspartate site is built by arginine 165 and arginine 228. The carbamoyl phosphate site is built by leucine 267 and proline 268.

Belongs to the aspartate/ornithine carbamoyltransferase superfamily. ATCase family. As to quaternary structure, heterododecamer (2C3:3R2) of six catalytic PyrB chains organized as two trimers (C3), and six regulatory PyrI chains organized as three dimers (R2).

The enzyme catalyses carbamoyl phosphate + L-aspartate = N-carbamoyl-L-aspartate + phosphate + H(+). It participates in pyrimidine metabolism; UMP biosynthesis via de novo pathway; (S)-dihydroorotate from bicarbonate: step 2/3. Its function is as follows. Catalyzes the condensation of carbamoyl phosphate and aspartate to form carbamoyl aspartate and inorganic phosphate, the committed step in the de novo pyrimidine nucleotide biosynthesis pathway. This chain is Aspartate carbamoyltransferase catalytic subunit, found in Clostridium perfringens (strain SM101 / Type A).